We begin with the raw amino-acid sequence, 243 residues long: DNA repair protein RecO (243 aa).

The protein belongs to the RecO family.

In terms of biological role, involved in DNA repair and RecF pathway recombination. The sequence is that of DNA repair protein RecO from Chlamydia trachomatis serovar L2 (strain ATCC VR-902B / DSM 19102 / 434/Bu).